The following is a 112-amino-acid chain: Hydrogenase maturation factor HypA (112 aa).

Histidine 2 serves as a coordination point for Ni(2+). 4 residues coordinate Zn(2+): cysteine 73, cysteine 76, cysteine 88, and cysteine 91.

The protein belongs to the HypA/HybF family.

In terms of biological role, involved in the maturation of [NiFe] hydrogenases. Required for nickel insertion into the metal center of the hydrogenase. In Synechococcus elongatus (strain ATCC 33912 / PCC 7942 / FACHB-805) (Anacystis nidulans R2), this protein is Hydrogenase maturation factor HypA.